A 773-amino-acid polypeptide reads, in one-letter code: Ergothioneine biosynthesis protein 1 (773 aa).

The L-histidine N(alpha)-methyltransferase stretch occupies residues 16–322 (PESIEQSLKR…ESTIADYSTY (307 aa)). Residue tyrosine 51 participates in L-histidine binding. Residues glycine 85, lysine 91, aspartate 112, and 142–143 (CF) contribute to the S-adenosyl-L-methionine site. Residues asparagine 172, tyrosine 212, and 287 to 289 (EES) contribute to the L-histidine site. The tract at residues 347–772 (ALRKVWLFIT…YAWIGARLVK (426 aa)) is hercynylcysteine S-oxide synthase. Histidine 382, histidine 476, and histidine 480 together coordinate Fe cation.

The protein in the N-terminal section; belongs to the methyltransferase superfamily. EgtD family. In the C-terminal section; belongs to the EgtB family. It depends on Fe(2+) as a cofactor.

The protein localises to the cytoplasm. It is found in the nucleus. The enzyme catalyses L-histidine + 3 S-adenosyl-L-methionine = hercynine + 3 S-adenosyl-L-homocysteine + 3 H(+). The catalysed reaction is hercynine + L-cysteine + O2 = S-(hercyn-2-yl)-L-cysteine S-oxide + H2O. Its pathway is amino-acid biosynthesis; ergothioneine biosynthesis. Catalyzes the SAM-dependent triple methylation of the alpha-amino group of histidine to form hercynine and subsequent conjugation with cysteine and oxygen to form hercynylcysteine sulfoxide, the first two steps in the biosynthesis pathway of ergothioneine. May play a role in meiosis. The sequence is that of Ergothioneine biosynthesis protein 1 from Schizosaccharomyces pombe (strain 972 / ATCC 24843) (Fission yeast).